Here is a 290-residue protein sequence, read N- to C-terminus: uncharacterized protein (290 aa).

The disordered stretch occupies residues glutamate 153–proline 178. Residues isoleucine 157–proline 178 show a composition bias toward polar residues. Residues leucine 202–valine 222 traverse the membrane as a helical segment. Residues lysine 246–serine 276 form a disordered region. The span at proline 252–serine 261 shows a compositional bias: polar residues.

It is found in the membrane. This is an uncharacterized protein from Mus musculus (Mouse).